The primary structure comprises 628 residues: Biosynthetic arginine decarboxylase (628 aa).

The residue at position 99 (Lys99) is an N6-(pyridoxal phosphate)lysine. A substrate-binding site is contributed by 279–289 (VDVGGGLGIDY).

It belongs to the Orn/Lys/Arg decarboxylase class-II family. SpeA subfamily. Mg(2+) serves as cofactor. Requires pyridoxal 5'-phosphate as cofactor.

The enzyme catalyses L-arginine + H(+) = agmatine + CO2. Functionally, catalyzes the biosynthesis of agmatine from arginine. In Xylella fastidiosa (strain 9a5c), this protein is Biosynthetic arginine decarboxylase.